Reading from the N-terminus, the 1002-residue chain is Transposase for transposon gamma-delta (1002 aa).

This sequence belongs to the transposase 7 family.

Required for transposition of transposon Tn1000. In Escherichia coli (strain K12), this protein is Transposase for transposon gamma-delta (tnpA).